The chain runs to 191 residues: Adenylate kinase (191 aa).

Residue 12–17 (GSGKTT) participates in ATP binding. Positions 34 to 63 (STGDLLRAESAKKTERGLLIEKFTSQGELV) are NMP. AMP-binding positions include threonine 35, arginine 40, 61 to 63 (ELV), 88 to 91 (GYPR), and glutamine 95. Residues 130 to 136 (GRSRGAD) form an LID region. Arginine 131 is a binding site for ATP. The AMP site is built by arginine 133 and arginine 145. Residue arginine 173 coordinates ATP.

The protein belongs to the adenylate kinase family. As to quaternary structure, monomer.

It localises to the cytoplasm. The enzyme catalyses AMP + ATP = 2 ADP. Its pathway is purine metabolism; AMP biosynthesis via salvage pathway; AMP from ADP: step 1/1. Functionally, catalyzes the reversible transfer of the terminal phosphate group between ATP and AMP. Plays an important role in cellular energy homeostasis and in adenine nucleotide metabolism. This chain is Adenylate kinase, found in Helicobacter pylori (strain G27).